The chain runs to 177 residues: Thaumatin-like protein (177 aa).

A signal peptide spans 1–26 (MASPATSSAVLVVVLVATLAAGGANA).

Belongs to the thaumatin family.

It localises to the secreted. This is Thaumatin-like protein from Oryza sativa subsp. japonica (Rice).